A 47-amino-acid polypeptide reads, in one-letter code: Large ribosomal subunit protein bL33 (47 aa).

This sequence belongs to the bacterial ribosomal protein bL33 family.

This is Large ribosomal subunit protein bL33 from Staphylococcus capitis.